Here is a 181-residue protein sequence, read N- to C-terminus: Peptide deformylase (181 aa).

Positions 99 and 141 each coordinate Fe cation. Glu142 is an active-site residue. Fe cation is bound at residue His145.

Belongs to the polypeptide deformylase family. Fe(2+) serves as cofactor.

The enzyme catalyses N-terminal N-formyl-L-methionyl-[peptide] + H2O = N-terminal L-methionyl-[peptide] + formate. Removes the formyl group from the N-terminal Met of newly synthesized proteins. Requires at least a dipeptide for an efficient rate of reaction. N-terminal L-methionine is a prerequisite for activity but the enzyme has broad specificity at other positions. In Chlamydia muridarum (strain MoPn / Nigg), this protein is Peptide deformylase.